The sequence spans 286 residues: Polyamine aminopropyltransferase (286 aa).

The PABS domain maps to 5 to 242 (DNWFTEVLEE…GWWSATLASK (238 aa)). Gln-35 is an S-methyl-5'-thioadenosine binding site. Spermidine-binding residues include His-66 and Asp-90. S-methyl-5'-thioadenosine is bound by residues Asp-110 and 141 to 142 (DG). The Proton acceptor role is filled by Asp-160. 160-163 (DSTD) is a binding site for spermidine.

Belongs to the spermidine/spermine synthase family. As to quaternary structure, homodimer or homotetramer.

The protein resides in the cytoplasm. The enzyme catalyses S-adenosyl 3-(methylsulfanyl)propylamine + putrescine = S-methyl-5'-thioadenosine + spermidine + H(+). It functions in the pathway amine and polyamine biosynthesis; spermidine biosynthesis; spermidine from putrescine: step 1/1. Its function is as follows. Catalyzes the irreversible transfer of a propylamine group from the amino donor S-adenosylmethioninamine (decarboxy-AdoMet) to putrescine (1,4-diaminobutane) to yield spermidine. The polypeptide is Polyamine aminopropyltransferase (Alkalilimnicola ehrlichii (strain ATCC BAA-1101 / DSM 17681 / MLHE-1)).